We begin with the raw amino-acid sequence, 234 residues long: Protein rgg8 (234 aa).

The protein resides in the cytoplasm. Its subcellular location is the nucleus. This Schizosaccharomyces pombe (strain 972 / ATCC 24843) (Fission yeast) protein is Protein rgg8 (rgg8).